The sequence spans 670 residues: UvrABC system protein B (670 aa).

Residues 51-433 (EGLKKREQFQ…SARIVEQIIR (383 aa)) enclose the Helicase ATP-binding domain. 64-71 (GVTGSGKT) is a binding site for ATP. The Beta-hairpin signature appears at 117 to 140 (YYDYYQPESYLPAKDQYIEKDAQI). In terms of domain architecture, Helicase C-terminal spans 453–612 (DVMQEIRKIV…IVPKTIRKPI (160 aa)). The UVR domain maps to 631–666 (PNVIIELDAEMREAADRLDFERAIQLRELIKKLEKE).

This sequence belongs to the UvrB family. As to quaternary structure, forms a heterotetramer with UvrA during the search for lesions. Interacts with UvrC in an incision complex.

The protein resides in the cytoplasm. Functionally, the UvrABC repair system catalyzes the recognition and processing of DNA lesions. A damage recognition complex composed of 2 UvrA and 2 UvrB subunits scans DNA for abnormalities. Upon binding of the UvrA(2)B(2) complex to a putative damaged site, the DNA wraps around one UvrB monomer. DNA wrap is dependent on ATP binding by UvrB and probably causes local melting of the DNA helix, facilitating insertion of UvrB beta-hairpin between the DNA strands. Then UvrB probes one DNA strand for the presence of a lesion. If a lesion is found the UvrA subunits dissociate and the UvrB-DNA preincision complex is formed. This complex is subsequently bound by UvrC and the second UvrB is released. If no lesion is found, the DNA wraps around the other UvrB subunit that will check the other stand for damage. The chain is UvrABC system protein B from Methanosarcina acetivorans (strain ATCC 35395 / DSM 2834 / JCM 12185 / C2A).